Reading from the N-terminus, the 564-residue chain is Pachytene checkpoint protein 2 (564 aa).

314–321 (GPPGTGKT) contacts ATP.

Belongs to the AAA ATPase family. PCH2 subfamily.

It localises to the nucleus. The protein localises to the nucleolus. The protein resides in the chromosome. Functionally, required for the pachytene checkpoint, the meiotic checkpoint that prevents chromosome segregation when defects in recombination and synaptonemal complex formation occurred. Represses meiotic recombination in the rDNA, probably by excluding the meiosis-specific protein HOP1 from the nucleolar region. The sequence is that of Pachytene checkpoint protein 2 (PCH2) from Saccharomyces cerevisiae (strain ATCC 204508 / S288c) (Baker's yeast).